The sequence spans 101 residues: Small ribosomal subunit protein uS14 (101 aa).

Residues 1 to 20 are disordered; the sequence is MAKTSAVEKNKRRRKLVANH. Basic residues predominate over residues 10–20; sequence NKRRRKLVANH.

Belongs to the universal ribosomal protein uS14 family. In terms of assembly, part of the 30S ribosomal subunit. Contacts proteins S3 and S10.

Functionally, binds 16S rRNA, required for the assembly of 30S particles and may also be responsible for determining the conformation of the 16S rRNA at the A site. The chain is Small ribosomal subunit protein uS14 from Sinorhizobium medicae (strain WSM419) (Ensifer medicae).